Here is a 440-residue protein sequence, read N- to C-terminus: 2-alpha-hydroxytaxane 2-O-benzoyltransferase (440 aa).

Active-site proton acceptor residues include H158 and D367.

This sequence belongs to the plant acyltransferase family.

The catalysed reaction is 10-deacetyl-2-debenzoylbaccatin III + benzoyl-CoA = 10-deacetylbaccatin III + CoA. It functions in the pathway alkaloid biosynthesis; taxol biosynthesis; baccatin III from 10-deacetyl-2-debenzoylbaccatin III: step 1/2. Functionally, catalyzes the conversion of 2-debenzoyl-7,13-diacetylbaccatin III, a semisynthetic substrate, to 7,13-diacetylbaccatin III. This Taxus cuspidata (Japanese yew) protein is 2-alpha-hydroxytaxane 2-O-benzoyltransferase.